Here is a 281-residue protein sequence, read N- to C-terminus: Pantothenate synthetase (281 aa).

30–37 (MGNLHQGH) lines the ATP pocket. H37 serves as the catalytic Proton donor. Residue Q61 coordinates (R)-pantoate. Q61 serves as a coordination point for beta-alanine. 148–151 (GQKD) serves as a coordination point for ATP. Position 154 (Q154) interacts with (R)-pantoate. ATP is bound by residues A177 and 185–188 (LSSR).

It belongs to the pantothenate synthetase family. In terms of assembly, homodimer.

It localises to the cytoplasm. It catalyses the reaction (R)-pantoate + beta-alanine + ATP = (R)-pantothenate + AMP + diphosphate + H(+). It functions in the pathway cofactor biosynthesis; (R)-pantothenate biosynthesis; (R)-pantothenate from (R)-pantoate and beta-alanine: step 1/1. Catalyzes the condensation of pantoate with beta-alanine in an ATP-dependent reaction via a pantoyl-adenylate intermediate. The chain is Pantothenate synthetase from Acinetobacter baylyi (strain ATCC 33305 / BD413 / ADP1).